The following is a 458-amino-acid chain: Glycine--tRNA ligase (458 aa).

Substrate contacts are provided by Arg-97 and Glu-171. ATP-binding positions include 203-205 (RNE), 213-218 (FRTREF), 287-288 (EL), and 331-334 (GADR). 218-222 (FEQME) contributes to the substrate binding site. 327-331 (EPSLG) serves as a coordination point for substrate.

This sequence belongs to the class-II aminoacyl-tRNA synthetase family. Homodimer.

The protein localises to the cytoplasm. The enzyme catalyses tRNA(Gly) + glycine + ATP = glycyl-tRNA(Gly) + AMP + diphosphate. In terms of biological role, catalyzes the attachment of glycine to tRNA(Gly). The chain is Glycine--tRNA ligase from Bacillus anthracis.